Here is a 232-residue protein sequence, read N- to C-terminus: Ribonuclease P protein component 3 (232 aa).

The protein belongs to the eukaryotic/archaeal RNase P protein component 3 family. As to quaternary structure, consists of a catalytic RNA component and at least 4-5 protein subunits.

Its subcellular location is the cytoplasm. The catalysed reaction is Endonucleolytic cleavage of RNA, removing 5'-extranucleotides from tRNA precursor.. In terms of biological role, part of ribonuclease P, a protein complex that generates mature tRNA molecules by cleaving their 5'-ends. This Methanococcus maripaludis (strain C7 / ATCC BAA-1331) protein is Ribonuclease P protein component 3.